The chain runs to 107 residues: ATP synthase subunit c (107 aa).

3 consecutive transmembrane segments (helical) span residues 4 to 24, 29 to 49, and 74 to 94; these read IVFLMLALSGFAFAAEGSMNQ, FSILAAGLGLGVAALGGAIGM, and MFIALAMIEAQVIYALVIALI.

Belongs to the ATPase C chain family. In terms of assembly, F-type ATPases have 2 components, F(1) - the catalytic core - and F(0) - the membrane proton channel. F(1) has five subunits: alpha(3), beta(3), gamma(1), delta(1), epsilon(1). F(0) has three main subunits: a(1), b(2) and c(10-14). The alpha and beta chains form an alternating ring which encloses part of the gamma chain. F(1) is attached to F(0) by a central stalk formed by the gamma and epsilon chains, while a peripheral stalk is formed by the delta and b chains.

The protein resides in the cell inner membrane. In terms of biological role, f(1)F(0) ATP synthase produces ATP from ADP in the presence of a proton or sodium gradient. F-type ATPases consist of two structural domains, F(1) containing the extramembraneous catalytic core and F(0) containing the membrane proton channel, linked together by a central stalk and a peripheral stalk. During catalysis, ATP synthesis in the catalytic domain of F(1) is coupled via a rotary mechanism of the central stalk subunits to proton translocation. Its function is as follows. Key component of the F(0) channel; it plays a direct role in translocation across the membrane. A homomeric c-ring of between 10-14 subunits forms the central stalk rotor element with the F(1) delta and epsilon subunits. In Campylobacter lari (strain RM2100 / D67 / ATCC BAA-1060), this protein is ATP synthase subunit c.